The primary structure comprises 277 residues: MEMO1 family protein Tpet_0837 (277 aa).

It belongs to the MEMO1 family.

The protein is MEMO1 family protein Tpet_0837 of Thermotoga petrophila (strain ATCC BAA-488 / DSM 13995 / JCM 10881 / RKU-1).